We begin with the raw amino-acid sequence, 403 residues long: 8-amino-7-oxononanoate synthase (403 aa).

A substrate-binding site is contributed by Arg-25. 112 to 113 (GY) serves as a coordination point for pyridoxal 5'-phosphate. Position 137 (His-137) interacts with substrate. Residues Ser-182, His-210, and Thr-239 each contribute to the pyridoxal 5'-phosphate site. Lys-242 is modified (N6-(pyridoxal phosphate)lysine). Thr-358 is a substrate binding site.

This sequence belongs to the class-II pyridoxal-phosphate-dependent aminotransferase family. BioF subfamily. Homodimer. Pyridoxal 5'-phosphate serves as cofactor.

It catalyses the reaction 6-carboxyhexanoyl-[ACP] + L-alanine + H(+) = (8S)-8-amino-7-oxononanoate + holo-[ACP] + CO2. It participates in cofactor biosynthesis; biotin biosynthesis. In terms of biological role, catalyzes the decarboxylative condensation of pimeloyl-[acyl-carrier protein] and L-alanine to produce 8-amino-7-oxononanoate (AON), [acyl-carrier protein], and carbon dioxide. The protein is 8-amino-7-oxononanoate synthase of Marinomonas sp. (strain MWYL1).